The sequence spans 321 residues: Transaldolase (321 aa).

The Schiff-base intermediate with substrate role is filled by lysine 132.

This sequence belongs to the transaldolase family. Type 1 subfamily. In terms of assembly, homodimer.

It localises to the cytoplasm. It carries out the reaction D-sedoheptulose 7-phosphate + D-glyceraldehyde 3-phosphate = D-erythrose 4-phosphate + beta-D-fructose 6-phosphate. It participates in carbohydrate degradation; pentose phosphate pathway; D-glyceraldehyde 3-phosphate and beta-D-fructose 6-phosphate from D-ribose 5-phosphate and D-xylulose 5-phosphate (non-oxidative stage): step 2/3. Transaldolase is important for the balance of metabolites in the pentose-phosphate pathway. In Rhizobium etli (strain ATCC 51251 / DSM 11541 / JCM 21823 / NBRC 15573 / CFN 42), this protein is Transaldolase.